The sequence spans 388 residues: LL-diaminopimelate aminotransferase (388 aa).

Positions 13, 38, 102, 126, and 176 each coordinate substrate. Residues 101 to 102, Tyr-126, Asn-176, Tyr-207, and 235 to 237 each bind pyridoxal 5'-phosphate; these read SK and SLS. Residue Lys-238 is modified to N6-(pyridoxal phosphate)lysine. Arg-246 serves as a coordination point for pyridoxal 5'-phosphate. Arg-364 is a substrate binding site.

Belongs to the class-I pyridoxal-phosphate-dependent aminotransferase family. LL-diaminopimelate aminotransferase subfamily. In terms of assembly, homodimer. The cofactor is pyridoxal 5'-phosphate.

The enzyme catalyses (2S,6S)-2,6-diaminopimelate + 2-oxoglutarate = (S)-2,3,4,5-tetrahydrodipicolinate + L-glutamate + H2O + H(+). The protein operates within amino-acid biosynthesis; L-lysine biosynthesis via DAP pathway; LL-2,6-diaminopimelate from (S)-tetrahydrodipicolinate (aminotransferase route): step 1/1. Involved in the synthesis of meso-diaminopimelate (m-DAP or DL-DAP), required for both lysine and peptidoglycan biosynthesis. Catalyzes the direct conversion of tetrahydrodipicolinate to LL-diaminopimelate. The polypeptide is LL-diaminopimelate aminotransferase (Dehalococcoides mccartyi (strain CBDB1)).